The following is a 933-amino-acid chain: Protein translocase subunit SecA (933 aa).

ATP is bound by residues Gln87, 105–109, and Asp515; that span reads GEGKT. Disordered stretches follow at residues 567–588, 840–861, and 880–933; these read ESRR…PGSS, DVEA…RHAA, and AAAE…CGKL. Residues 845 to 856 are compositionally biased toward basic and acidic residues; sequence EEQRRQEAERMQ. The span at 880–897 shows a compositional bias: low complexity; the sequence is AAAEGDSAPTGGAQQQSA. Positions 905–914 are enriched in basic and acidic residues; that stretch reads VAREGPKVGR. Zn(2+) is bound by residues Cys918, Cys920, Cys929, and Cys930. A compositionally biased stretch (basic residues) spans 924–933; sequence KKYKHCCGKL.

This sequence belongs to the SecA family. Monomer and homodimer. Part of the essential Sec protein translocation apparatus which comprises SecA, SecYEG and auxiliary proteins SecDF-YajC and YidC. The cofactor is Zn(2+).

It is found in the cell inner membrane. The protein resides in the cytoplasm. It catalyses the reaction ATP + H2O + cellular proteinSide 1 = ADP + phosphate + cellular proteinSide 2.. Its function is as follows. Part of the Sec protein translocase complex. Interacts with the SecYEG preprotein conducting channel. Has a central role in coupling the hydrolysis of ATP to the transfer of proteins into and across the cell membrane, serving both as a receptor for the preprotein-SecB complex and as an ATP-driven molecular motor driving the stepwise translocation of polypeptide chains across the membrane. The polypeptide is Protein translocase subunit SecA (Halorhodospira halophila (strain DSM 244 / SL1) (Ectothiorhodospira halophila (strain DSM 244 / SL1))).